The chain runs to 682 residues: 1,4-alpha-glucan-branching enzyme (682 aa).

Residues tryptophan 88 and lysine 124 each contribute to the (1,4-alpha-D-glucosyl)n site. Aspartate 342 (nucleophile) is an active-site residue. Glutamate 397 functions as the Proton donor in the catalytic mechanism.

The protein belongs to the glycosyl hydrolase 13 family. GlgB subfamily.

It is found in the cytoplasm. The catalysed reaction is Transfers a segment of a (1-&gt;4)-alpha-D-glucan chain to a primary hydroxy group in a similar glucan chain.. The protein operates within glycan biosynthesis; glycogen biosynthesis. In terms of biological role, glycogen-branching enzyme participates in the glycogen biosynthetic process along with glycogenin and glycogen synthase. Generates alpha-1,6-glucosidic branches from alpha-1,4-linked glucose chains, to increase solubility of the glycogen polymer. This chain is 1,4-alpha-glucan-branching enzyme (GLC3), found in Cryptococcus neoformans var. neoformans serotype D (strain B-3501A) (Filobasidiella neoformans).